The following is a 474-amino-acid chain: Bifunctional protein HldE (474 aa).

Residues 1 to 317 are ribokinase; sequence MKLSMPRFDR…RRAVQREQGS (317 aa). 194-197 contacts ATP; sequence NLAE. The active site involves Asp263. The tract at residues 343-474 is cytidylyltransferase; sequence FTNGCFDILH…GIVEKIRRQP (132 aa).

It in the N-terminal section; belongs to the carbohydrate kinase PfkB family. This sequence in the C-terminal section; belongs to the cytidylyltransferase family. Homodimer.

The enzyme catalyses D-glycero-beta-D-manno-heptose 7-phosphate + ATP = D-glycero-beta-D-manno-heptose 1,7-bisphosphate + ADP + H(+). It catalyses the reaction D-glycero-beta-D-manno-heptose 1-phosphate + ATP + H(+) = ADP-D-glycero-beta-D-manno-heptose + diphosphate. Its pathway is nucleotide-sugar biosynthesis; ADP-L-glycero-beta-D-manno-heptose biosynthesis; ADP-L-glycero-beta-D-manno-heptose from D-glycero-beta-D-manno-heptose 7-phosphate: step 1/4. It participates in nucleotide-sugar biosynthesis; ADP-L-glycero-beta-D-manno-heptose biosynthesis; ADP-L-glycero-beta-D-manno-heptose from D-glycero-beta-D-manno-heptose 7-phosphate: step 3/4. In terms of biological role, catalyzes the phosphorylation of D-glycero-D-manno-heptose 7-phosphate at the C-1 position to selectively form D-glycero-beta-D-manno-heptose-1,7-bisphosphate. Catalyzes the ADP transfer from ATP to D-glycero-beta-D-manno-heptose 1-phosphate, yielding ADP-D-glycero-beta-D-manno-heptose. In Azotobacter vinelandii (strain DJ / ATCC BAA-1303), this protein is Bifunctional protein HldE.